The sequence spans 262 residues: Protein BREAKING OF ASYMMETRY IN THE STOMATAL LINEAGE (262 aa).

Disordered regions lie at residues 32–107 (DEDG…QPPV) and 129–222 (KEGK…GRGS). Low complexity predominate over residues 37–47 (NNNGNTTNNNN). 2 consecutive short sequence motifs (nuclear localization signal) follow at residues 50–57 (FKRIKRKI) and 61–68 (KKKRSERK). Positions 51–66 (KRIKRKIKSTKKKRSE) are enriched in basic residues. A phosphoserine; by ASK7 mark is found at S72, S85, S86, and S87. Residues 84 to 95 (RSSSVSPTTSGS) are compositionally biased toward low complexity. S89 carries the phosphoserine; by ASK7 and MPK6 modification. T91 is subject to Phosphothreonine; by ASK7. Positions 129–146 (KEGKQEKKETESSSEKSP) are enriched in basic and acidic residues. Phosphoserine; by MPK6 occurs at positions 145 and 168. Positions 179–189 (NDNTSCQGTKD) are enriched in polar residues. Residues 190–200 (VSSDVTERTKE) show a composition bias toward basic and acidic residues. The segment at 222–262 (SFAFPILGVEWMGSPAKMPESDDLSPKKQKPVALGFQCCRF) is required for polarization at the cell cortex. Residues 223–226 (FAFP) carry the FxFP, required for cortical polarity formation motif. 2 positions are modified to phosphoserine; by MPK6: S235 and S246.

In terms of assembly, component of a complex made of POLAR, BASL, ASK7/BIN2 and ASK3/SK12. Interacts with POLAR, ASK7/BIN2 and ASK3/SK12. Binds to YDA when phosphorylated. Interacts with MPK6, MPK3 and MKK5. Cortical localization of BASL requires phosphorylation mediated by MPK3 and MPK6. Phosphorylation promotes YDA binding. Phosphorylation status modulates subcellular mobility. In terms of tissue distribution, mostly expressed in stomatal lineage cells including asymmetrically dividing meristemoid mother cells (MMCs) and meristemoids, and, at lower levels, in their sisters. Also present in vasculature. Expressed at low levels in the epidermal pavement cells.

Its subcellular location is the cytoplasm. It localises to the nucleus. The protein resides in the cell cortex. The protein localises to the cell membrane. Regulates asymmetric cell division (ACD), especially in stomatal-lineage cells, probably by modulating accumulation and subcellular polarization of POLAR and SPCH. Mediates an attenuation of MAPK signaling upon polarization of POLAR and ASK7/BIN2 in stomatal lineage ground cells (SLGCs) undergoing ACD, and relieves BIN2 inhibition of SPCH in the nucleus. When phosphorylated, functions as a scaffold and recruits the MAPKKK YODA, MPK3 and MPK6 to spatially reorganize the MAPK signaling pathway at the cortex of cells undergoing ACD. Cortical polarization leads to elevated nuclear MPK6 signaling and lowered SPCH abundance in one of the two daughter cells, thus differentiating the two daughter cells after ACD. In Arabidopsis thaliana (Mouse-ear cress), this protein is Protein BREAKING OF ASYMMETRY IN THE STOMATAL LINEAGE.